The primary structure comprises 92 residues: Serine protease inhibitor I/II (92 aa).

Residues 1–19 form the signal peptide; the sequence is MKLALALCAAFLLVVLVQA. 2 Pacifastin domains span residues 20–54 and 57–92; these read EQEC…CPPH and EVTC…CPQK. 6 disulfides stabilise this stretch: C23–C38, C33–C51, C36–C46, C60–C75, C70–C89, and C73–C84.

Belongs to the protease inhibitor I19 family. As to expression, expressed in hemolymph, ovaries, testes and fat body of adults but are absent in the gut. Also present in larval hemolymph and fat body.

It is found in the secreted. In terms of biological role, in vitro, is active against alpha-chymotrypsin and trypsin. Functionally, in vitro, is active against alpha-chymotrypsin and pancreatic elastase. The sequence is that of Serine protease inhibitor I/II from Schistocerca gregaria (Desert locust).